We begin with the raw amino-acid sequence, 972 residues long: Leucine--tRNA ligase (972 aa).

Positions 78-89 match the 'HIGH' region motif; that stretch reads PYPSGDGLHVGH. The 'KMSKS' region signature appears at 741 to 745; the sequence is KIGKS. Lys-744 contacts ATP.

The protein belongs to the class-I aminoacyl-tRNA synthetase family.

The protein localises to the cytoplasm. It catalyses the reaction tRNA(Leu) + L-leucine + ATP = L-leucyl-tRNA(Leu) + AMP + diphosphate. This Mycobacterium leprae (strain Br4923) protein is Leucine--tRNA ligase.